The chain runs to 226 residues: Chalcone--flavanone isomerase (226 aa).

Residues threonine 51, asparagine 116, and serine 194 each contribute to the substrate site.

This sequence belongs to the chalcone isomerase family.

The catalysed reaction is a chalcone = a flavanone.. It functions in the pathway secondary metabolite biosynthesis; flavonoid biosynthesis. Functionally, catalyzes the intramolecular cyclization of bicyclic chalcones into tricyclic (S)-flavanones. Responsible for the isomerization of 4,2',4',6'-tetrahydroxychalcone (also termed chalcone) into naringenin. The protein is Chalcone--flavanone isomerase (CHI) of Canna generalis (Canna lily).